The primary structure comprises 103 residues: Histone H4 (103 aa).

The span at 1 to 14 (MSGRGKGGKGLGKG) shows a compositional bias: gly residues. The disordered stretch occupies residues 1–20 (MSGRGKGGKGLGKGGAKRHR). N6-acetyl-N6-methyllysine; alternate is present on Lys-6. 3 positions are modified to N6-methyllysine; alternate: Lys-6, Lys-9, and Lys-13. Lys-13 bears the N6-acetyl-N6-methyllysine; alternate mark. Residues 17-21 (KRHRK) mediate DNA binding. At Lys-92 the chain carries N6-glutaryllysine.

This sequence belongs to the histone H4 family. As to quaternary structure, the nucleosome is a histone octamer containing two molecules each of H2A, H2B, H3 and H4 assembled in one H3-H4 heterotetramer and two H2A-H2B heterodimers. The octamer wraps approximately 147 bp of DNA. Post-translationally, glutarylation at Lys-92 (H4K91glu) destabilizes nucleosomes by promoting dissociation of the H2A-H2B dimers from nucleosomes.

Its subcellular location is the nucleus. The protein localises to the chromosome. In terms of biological role, core component of nucleosome. Nucleosomes wrap and compact DNA into chromatin, limiting DNA accessibility to the cellular machineries which require DNA as a template. Histones thereby play a central role in transcription regulation, DNA repair, DNA replication and chromosomal stability. DNA accessibility is regulated via a complex set of post-translational modifications of histones, also called histone code, and nucleosome remodeling. The sequence is that of Histone H4 (H4.1) from Phanerodontia chrysosporium (White-rot fungus).